We begin with the raw amino-acid sequence, 116 residues long: Large ribosomal subunit protein bL17 (116 aa).

This sequence belongs to the bacterial ribosomal protein bL17 family. In terms of assembly, part of the 50S ribosomal subunit. Contacts protein L32.

In Synechococcus sp. (strain CC9902), this protein is Large ribosomal subunit protein bL17.